A 346-amino-acid chain; its full sequence is L-threonine 3-dehydrogenase (346 aa).

Residue Cys-42 coordinates Zn(2+). Catalysis depends on charge relay system residues Thr-44 and His-47. Zn(2+)-binding residues include His-67, Glu-68, Cys-97, Cys-100, Cys-103, and Cys-111. NAD(+) is bound by residues Ile-179, Asp-199, Arg-204, Leu-266–Leu-268, and Ile-291–Thr-292.

Belongs to the zinc-containing alcohol dehydrogenase family. In terms of assembly, homotetramer. Zn(2+) is required as a cofactor.

It localises to the cytoplasm. It carries out the reaction L-threonine + NAD(+) = (2S)-2-amino-3-oxobutanoate + NADH + H(+). Its pathway is amino-acid degradation; L-threonine degradation via oxydo-reductase pathway; glycine from L-threonine: step 1/2. Its function is as follows. Catalyzes the NAD(+)-dependent oxidation of L-threonine to 2-amino-3-ketobutyrate. This chain is L-threonine 3-dehydrogenase, found in Bacillus licheniformis (strain ATCC 14580 / DSM 13 / JCM 2505 / CCUG 7422 / NBRC 12200 / NCIMB 9375 / NCTC 10341 / NRRL NRS-1264 / Gibson 46).